Here is a 780-residue protein sequence, read N- to C-terminus: 5-methyltetrahydropteroyltriglutamate--homocysteine methyltransferase (780 aa).

5-methyltetrahydropteroyltri-L-glutamate contacts are provided by residues 15 to 18 (RELK) and lysine 114. Residues 457 to 459 (IGS) and glutamate 510 each bind L-homocysteine. Residues 457–459 (IGS) and glutamate 510 contribute to the L-methionine site. 5-methyltetrahydropteroyltri-L-glutamate is bound by residues 541 to 542 (RC) and tryptophan 587. Residue aspartate 625 coordinates L-homocysteine. Residue aspartate 625 coordinates L-methionine. Glutamate 631 serves as a coordination point for 5-methyltetrahydropteroyltri-L-glutamate. Zn(2+)-binding residues include histidine 667, cysteine 669, and glutamate 691. The active-site Proton donor is histidine 720. Residue cysteine 752 participates in Zn(2+) binding.

It belongs to the vitamin-B12 independent methionine synthase family. The cofactor is Zn(2+).

It carries out the reaction 5-methyltetrahydropteroyltri-L-glutamate + L-homocysteine = tetrahydropteroyltri-L-glutamate + L-methionine. Its pathway is amino-acid biosynthesis; L-methionine biosynthesis via de novo pathway; L-methionine from L-homocysteine (MetE route): step 1/1. Functionally, catalyzes the transfer of a methyl group from 5-methyltetrahydrofolate to homocysteine resulting in methionine formation. In Nitratidesulfovibrio vulgaris (strain DSM 19637 / Miyazaki F) (Desulfovibrio vulgaris), this protein is 5-methyltetrahydropteroyltriglutamate--homocysteine methyltransferase.